Here is a 686-residue protein sequence, read N- to C-terminus: 3',5'-cyclic-AMP phosphodiesterase 4C (686 aa).

Phosphoserine is present on residues Ser9, Ser28, Ser40, and Ser83. 2 disordered regions span residues Asn88–Val116 and Tyr124–Ala143. Residues Tyr124–Ser133 show a composition bias toward basic and acidic residues. A PDEase domain is found at Val313–Ser642. The active-site Proton donor is the His389. A 3',5'-cyclic AMP-binding site is contributed by His389. Positions 389 and 393 each coordinate AMP. Positions 393, 429, 430, and 547 each coordinate Zn(2+). AMP-binding residues include Asp430, Asp547, Gln598, and Phe601. Residue Asp430 participates in Mg(2+) binding. Asp430 is a binding site for Mn(2+). Residues Gln598 and Phe601 each coordinate 3',5'-cyclic AMP. Position 642 is a phosphoserine (Ser642). Positions Glu660–Gly671 are enriched in acidic residues. Residues Glu660–Thr686 are disordered. Residues Thr674 to Thr686 show a composition bias toward polar residues.

It belongs to the cyclic nucleotide phosphodiesterase family. PDE4 subfamily. Part of a complex containing AKAP5, ADCY5, ADCY6 and PKD2. Requires Zn(2+) as cofactor. Mg(2+) is required as a cofactor. It depends on Mn(2+) as a cofactor.

The protein resides in the cell projection. Its subcellular location is the cilium. The catalysed reaction is 3',5'-cyclic AMP + H2O = AMP + H(+). Its pathway is purine metabolism; 3',5'-cyclic AMP degradation; AMP from 3',5'-cyclic AMP: step 1/1. Functionally, hydrolyzes the second messenger cAMP, which is a key regulator of many important physiological processes. The chain is 3',5'-cyclic-AMP phosphodiesterase 4C from Mus musculus (Mouse).